The primary structure comprises 68 residues: MARITIEDCLKRVPNRFLLVHMAAKRVRQMREGSEYLVSSPKNEDIVVALREIAADKVYVSDNMPDEL.

The protein belongs to the RNA polymerase subunit omega family. The RNAP catalytic core consists of 2 alpha, 1 beta, 1 beta' and 1 omega subunit. When a sigma factor is associated with the core the holoenzyme is formed, which can initiate transcription.

It carries out the reaction RNA(n) + a ribonucleoside 5'-triphosphate = RNA(n+1) + diphosphate. In terms of biological role, promotes RNA polymerase assembly. Latches the N- and C-terminal regions of the beta' subunit thereby facilitating its interaction with the beta and alpha subunits. This chain is DNA-directed RNA polymerase subunit omega, found in Desulfatibacillum aliphaticivorans.